A 158-amino-acid polypeptide reads, in one-letter code: Small ribosomal subunit protein uS9 (158 aa).

Positions 1–10 (MSDTMQSLDQ) are enriched in polar residues. Positions 1–35 (MSDTMQSLDQLSALKTAAPDAPKREKKVDKQGRAY) are disordered. Residues 21–32 (APKREKKVDKQG) show a composition bias toward basic and acidic residues.

This sequence belongs to the universal ribosomal protein uS9 family.

This chain is Small ribosomal subunit protein uS9, found in Afipia carboxidovorans (strain ATCC 49405 / DSM 1227 / KCTC 32145 / OM5) (Oligotropha carboxidovorans).